A 1041-amino-acid polypeptide reads, in one-letter code: Sodium/potassium-transporting ATPase subunit alpha (1041 aa).

4 consecutive transmembrane segments (helical) span residues 115 to 135, 147 to 167, 312 to 332, and 338 to 358; these read FGGFAMLLWIGAILCFVAYSI, NLYLGIVLSAVVIVTGIFSYY, LITGVAVFLGVTFFVIAFILG, and AVIFLIGIIVANVPEGLLATV. Residue D394 is the 4-aspartylphosphate intermediate of the active site. K526 contacts ATP. 4 consecutive transmembrane segments (helical) span residues 808 to 828, 870 to 890, 935 to 955, and 970 to 990; these read FLAFILCDIPLPLGTVTILCI, MAYGQIGMIQAAAGFFVYFVI, TCHTAFFISIVVVQWADLIIC, and WALNFGLVFETVLAAFLSYCP.

Belongs to the cation transport ATPase (P-type) (TC 3.A.3) family. Type IIC subfamily. As to quaternary structure, the sodium/potassium-transporting ATPase is composed of a catalytic alpha subunit, an auxiliary non-catalytic beta subunit and an additional regulatory subunit. In terms of tissue distribution, high levels are found in some adult tissues: Malpighian tubules, indirect flight muscles, tubular leg muscles and throughout the nervous system (brain, optic lobes, retina and ventral thoracic neuromere). Lower levels are detected at the posterior end where the reproductive organs and rectum are located.

It is found in the cell membrane. It catalyses the reaction K(+)(out) + Na(+)(in) + ATP + H2O = K(+)(in) + Na(+)(out) + ADP + phosphate + H(+). In terms of biological role, this is the catalytic component of the active enzyme, which catalyzes the hydrolysis of ATP coupled with the exchange of sodium and potassium ions across the plasma membrane. This action creates the electrochemical gradient of sodium and potassium ions, providing the energy for active transport of various nutrients. In Drosophila melanogaster (Fruit fly), this protein is Sodium/potassium-transporting ATPase subunit alpha (Atpalpha).